A 74-amino-acid polypeptide reads, in one-letter code: ATP synthase subunit c (74 aa).

2 helical membrane-spanning segments follow: residues 5-25 and 49-69; these read LAYI…LGVG and LFIG…VALL.

It belongs to the ATPase C chain family. F-type ATPases have 2 components, F(1) - the catalytic core - and F(0) - the membrane proton channel. F(1) has five subunits: alpha(3), beta(3), gamma(1), delta(1), epsilon(1). F(0) has three main subunits: a(1), b(2) and c(10-14). The alpha and beta chains form an alternating ring which encloses part of the gamma chain. F(1) is attached to F(0) by a central stalk formed by the gamma and epsilon chains, while a peripheral stalk is formed by the delta and b chains.

The protein resides in the cell inner membrane. Its function is as follows. F(1)F(0) ATP synthase produces ATP from ADP in the presence of a proton or sodium gradient. F-type ATPases consist of two structural domains, F(1) containing the extramembraneous catalytic core and F(0) containing the membrane proton channel, linked together by a central stalk and a peripheral stalk. During catalysis, ATP synthesis in the catalytic domain of F(1) is coupled via a rotary mechanism of the central stalk subunits to proton translocation. In terms of biological role, key component of the F(0) channel; it plays a direct role in translocation across the membrane. A homomeric c-ring of between 10-14 subunits forms the central stalk rotor element with the F(1) delta and epsilon subunits. The polypeptide is ATP synthase subunit c (Ruegeria sp. (strain TM1040) (Silicibacter sp.)).